A 181-amino-acid polypeptide reads, in one-letter code: UPF0316 protein Bcer98_2136 (181 aa).

3 helical membrane-spanning segments follow: residues 6–26 (LIFVLQIIYVPVLTIRTILLV), 32–52 (SAAGVGLLEGAIYIISLGIVF), and 58–78 (WMNIVAYIIGFSAGLLLGGYI).

Belongs to the UPF0316 family.

The protein resides in the cell membrane. The polypeptide is UPF0316 protein Bcer98_2136 (Bacillus cytotoxicus (strain DSM 22905 / CIP 110041 / 391-98 / NVH 391-98)).